We begin with the raw amino-acid sequence, 277 residues long: Energy-coupling factor transporter ATP-binding protein EcfA1 (277 aa).

The ABC transporter domain occupies 5 to 240; sequence LEVENLVFKY…SEDMVEIGLD (236 aa). 40–47 contacts ATP; that stretch reads GQNGSGKS. Glu-166 (proton acceptor) is an active-site residue.

It belongs to the ABC transporter superfamily. Energy-coupling factor EcfA family. As to quaternary structure, forms a stable energy-coupling factor (ECF) transporter complex composed of 2 membrane-embedded substrate-binding proteins (S component), 2 ATP-binding proteins (A component) and 2 transmembrane proteins (T component). In L.lactis forms a stable complex with EcfA' and EcfT and substrate-binding components. In E.coli forms a stable complex with EcfA', EcfT and individually with 3 tested substrate-binding components (BioY, NiaX and ThiT) with a stoichiometry of 1.1:1:1. The core ECF complex interacts with a number of substrate-specific binding components, including BioY, BioY2, HmpT, NiaX, PanT, QueT, RibU and ThiT.

It is found in the cell membrane. Its function is as follows. ATP-binding (A) component of a common energy-coupling factor (ECF) ABC-transporter complex. Unlike classic ABC transporters this ECF transporter provides the energy necessary to transport a number of different substrates. In this organism these probably include biotin, thiamine precursor, niacin, pantothenic acid, queuosine precursor, riboflavin and thiamine. Uptake of niacin or riboflavin into proteosomes containing EcfA1A2T and Niax or RibU has been demonstrated. Uptake requires hydrolyzable Mg-ATP and is substrate-specific; NiaX-containing proteosomes did not transport riboflavin. The polypeptide is Energy-coupling factor transporter ATP-binding protein EcfA1 (Lactococcus lactis subsp. cremoris (strain MG1363)).